The primary structure comprises 49 residues: FFECTLECDIKKEGKPCKPKGCKCNDKDNKDHKKCSGGWRCKLKLCLKF.

4 disulfide bridges follow: C4–C17, C8–C41, C22–C24, and C35–C46.

Expressed by the venom gland.

It is found in the secreted. In terms of biological role, toxin that causes irreversible contractile paralysis into adult Aedes aegypti resulting in 100% mortality after 24 hours. The polypeptide is U1-theraphotoxin-Lp1b (Lasiodora parahybana (Brazilian salmon pink birdeater)).